The primary structure comprises 178 residues: Thymidine kinase (178 aa).

An ATP-binding site is contributed by 13 to 20; that stretch reads GPMFAGKS. Residue Glu-85 is the Proton acceptor of the active site. Phe-115 is a substrate binding site. Residues Cys-140 and Cys-143 each coordinate Zn(2+). Residue 159–163 coordinates substrate; the sequence is IEIIG. The Zn(2+) site is built by Cys-172 and Cys-175.

It belongs to the thymidine kinase family.

It catalyses the reaction thymidine + ATP = dTMP + ADP + H(+). This chain is Thymidine kinase (TK), found in Myxoma virus (strain Lausanne) (MYXV).